The sequence spans 480 residues: Aspartyl/glutamyl-tRNA(Asn/Gln) amidotransferase subunit B (480 aa).

The protein belongs to the GatB/GatE family. GatB subfamily. In terms of assembly, heterotrimer of A, B and C subunits.

It carries out the reaction L-glutamyl-tRNA(Gln) + L-glutamine + ATP + H2O = L-glutaminyl-tRNA(Gln) + L-glutamate + ADP + phosphate + H(+). It catalyses the reaction L-aspartyl-tRNA(Asn) + L-glutamine + ATP + H2O = L-asparaginyl-tRNA(Asn) + L-glutamate + ADP + phosphate + 2 H(+). In terms of biological role, allows the formation of correctly charged Asn-tRNA(Asn) or Gln-tRNA(Gln) through the transamidation of misacylated Asp-tRNA(Asn) or Glu-tRNA(Gln) in organisms which lack either or both of asparaginyl-tRNA or glutaminyl-tRNA synthetases. The reaction takes place in the presence of glutamine and ATP through an activated phospho-Asp-tRNA(Asn) or phospho-Glu-tRNA(Gln). This is Aspartyl/glutamyl-tRNA(Asn/Gln) amidotransferase subunit B from Streptococcus pneumoniae serotype 2 (strain D39 / NCTC 7466).